A 365-amino-acid polypeptide reads, in one-letter code: Putative agmatine deiminase (365 aa).

Agmatine-binding residues include glutamate 214 and aspartate 220. The active-site Amidino-cysteine intermediate is the cysteine 357.

Belongs to the agmatine deiminase family. Tetramer of two homodimers.

It catalyses the reaction agmatine + H2O = N-carbamoylputrescine + NH4(+). The polypeptide is Putative agmatine deiminase (Enterococcus faecalis (strain ATCC 700802 / V583)).